The following is a 246-amino-acid chain: Triosephosphate isomerase (246 aa).

9–11 (NWK) serves as a coordination point for substrate. Residue His-91 is the Electrophile of the active site. Catalysis depends on Glu-161, which acts as the Proton acceptor. Substrate-binding positions include Gly-167, Ser-206, and 227-228 (GG).

The protein belongs to the triosephosphate isomerase family. As to quaternary structure, homodimer.

Its subcellular location is the cytoplasm. It carries out the reaction D-glyceraldehyde 3-phosphate = dihydroxyacetone phosphate. It participates in carbohydrate biosynthesis; gluconeogenesis. It functions in the pathway carbohydrate degradation; glycolysis; D-glyceraldehyde 3-phosphate from glycerone phosphate: step 1/1. Functionally, involved in the gluconeogenesis. Catalyzes stereospecifically the conversion of dihydroxyacetone phosphate (DHAP) to D-glyceraldehyde-3-phosphate (G3P). The protein is Triosephosphate isomerase of Ruegeria sp. (strain TM1040) (Silicibacter sp.).